Reading from the N-terminus, the 315-residue chain is MSTPRIKAAIIGSGNIGTDLMIKIMRTSRHLEMGAMVGIDPKSDGLARAARLNVPVTHEGIEGLRRLPNYAEIGVVFDATSAKAHLTNNALLQKDGKKVIDLTPAAVGPFTIPAINGDANLEEPNVNMVTCGGQATIPMVYAVKRAVKRLVYGEIVASISSKSAGPGTRANIDEFTETTSKAIEVLGGAERGKAVIILNPAEPPLIMRDTVFTLSQGGDREAIEASILEMAETVKTYVPGYRLKQKVQFEVIGDNAPVRIPGIGTASGLKTTILLEVEGAAHYLPAYAGNLDIMTSAALVTADRWAARRLAKEAA.

13-16 (SGNI) provides a ligand contact to NAD(+). Cys-131 (acyl-thioester intermediate) is an active-site residue. Residues 163–171 (SAGPGTRAN) and Asn-290 each bind NAD(+).

It belongs to the acetaldehyde dehydrogenase family.

It catalyses the reaction acetaldehyde + NAD(+) + CoA = acetyl-CoA + NADH + H(+). This is Acetaldehyde dehydrogenase from Xanthobacter autotrophicus (strain ATCC BAA-1158 / Py2).